The following is a 106-amino-acid chain: Small ribosomal subunit protein uS10 (106 aa).

It belongs to the universal ribosomal protein uS10 family. In terms of assembly, part of the 30S ribosomal subunit.

Its function is as follows. Involved in the binding of tRNA to the ribosomes. The sequence is that of Small ribosomal subunit protein uS10 from Caldicellulosiruptor saccharolyticus (strain ATCC 43494 / DSM 8903 / Tp8T 6331).